The chain runs to 376 residues: C2H2 type master regulator of conidiophore development brlA (376 aa).

The span at 20 to 29 (TSFSSASSSA) shows a compositional bias: low complexity. Disordered regions lie at residues 20–47 (TSFSSASSSAYDPFTPSSRRSTPNELSL), 197–229 (HHHHHNHHQHHHAQQSPMGQHFQLHSNTGASPN), and 241–267 (EAQRKTSELQRAQIRESRKRAGKPESG). A compositionally biased stretch (polar residues) spans 34–44 (TPSSRRSTPNE). The span at 197-209 (HHHHHNHHQHHHA) shows a compositional bias: basic residues. The span at 219-229 (QLHSNTGASPN) shows a compositional bias: polar residues. Residues 241-256 (EAQRKTSELQRAQIRE) show a composition bias toward basic and acidic residues. The C2H2-type 1; degenerate zinc-finger motif lies at 277–301 (CKCDYPGCNKAFRRNEHLKRHKQTF). The segment at 309–332 (FSCEFCGKDQFNRQDNLNNHRKLH) adopts a C2H2-type 2 zinc-finger fold. The tract at residues 351-376 (IIEHEERSRKRRAPPKSKAEKRDYDF) is disordered. The segment covering 367–376 (SKAEKRDYDF) has biased composition (basic and acidic residues).

The protein localises to the nucleus. Its function is as follows. BrlA, abaA and wetA are pivotal regulators of conidiophore development and conidium maturation. They act individually and together to regulate their own expression and that of numerous other sporulation-specific genes. Binds promoters of target genes at brlA response elements (BREs) containing the conserved sequence 5'-(C/A)(A/G)AGGG(G/A)-3'. This Hapsidospora chrysogena (Acremonium chrysogenum) protein is C2H2 type master regulator of conidiophore development brlA.